The primary structure comprises 61 residues: Probable tautomerase SAV1363 (61 aa).

The Proton acceptor; via imino nitrogen role is filled by P2.

Belongs to the 4-oxalocrotonate tautomerase family.

This is Probable tautomerase SAV1363 from Staphylococcus aureus (strain Mu50 / ATCC 700699).